Here is a 101-residue protein sequence, read N- to C-terminus: Large ribosomal subunit protein uL23 (101 aa).

The protein belongs to the universal ribosomal protein uL23 family. In terms of assembly, part of the 50S ribosomal subunit. Contacts protein L29, and trigger factor when it is bound to the ribosome.

In terms of biological role, one of the early assembly proteins it binds 23S rRNA. One of the proteins that surrounds the polypeptide exit tunnel on the outside of the ribosome. Forms the main docking site for trigger factor binding to the ribosome. The chain is Large ribosomal subunit protein uL23 from Corynebacterium diphtheriae (strain ATCC 700971 / NCTC 13129 / Biotype gravis).